We begin with the raw amino-acid sequence, 425 residues long: Histidinol dehydrogenase (425 aa).

Tyr124, Gln184, and Asn207 together coordinate NAD(+). Ser230, Gln252, and His255 together coordinate substrate. Gln252 and His255 together coordinate Zn(2+). Active-site proton acceptor residues include Glu321 and His322. His322, Asp355, Glu409, and His414 together coordinate substrate. Asp355 serves as a coordination point for Zn(2+). His414 lines the Zn(2+) pocket.

Belongs to the histidinol dehydrogenase family. The cofactor is Zn(2+).

The enzyme catalyses L-histidinol + 2 NAD(+) + H2O = L-histidine + 2 NADH + 3 H(+). It functions in the pathway amino-acid biosynthesis; L-histidine biosynthesis; L-histidine from 5-phospho-alpha-D-ribose 1-diphosphate: step 9/9. In terms of biological role, catalyzes the sequential NAD-dependent oxidations of L-histidinol to L-histidinaldehyde and then to L-histidine. The sequence is that of Histidinol dehydrogenase from Halobacterium salinarum (strain ATCC 700922 / JCM 11081 / NRC-1) (Halobacterium halobium).